A 133-amino-acid chain; its full sequence is IgW chain C region, secreted form 2 (133 aa).

One can recognise an Ig-like domain in the interval 1–71 (VISGFYPDSV…TGSRFNDRIS (71 aa)). N-linked (GlcNAc...) asparagine glycosylation is found at Asn32 and Asn112. The tract at residues 76-133 (KGGTVNLPVPGGNTPCTCPPSSCSGCMPKLVYQTDLNVTLENGGQLQYNCHQQACKIK) is secretory tail.

In terms of tissue distribution, expressed mainly in lymphoid tissues including spleen, epigonal organ and circulating lymphocytes.

It is found in the secreted. The chain is IgW chain C region, secreted form 2 from Heterodontus francisci (Horn shark).